The primary structure comprises 303 residues: Light-independent protochlorophyllide reductase iron-sulfur ATP-binding protein (303 aa).

The interval 1–24 is disordered; it reads MSSVLERPAAPAILPSRQDGEGSV. ATP-binding positions include 47 to 52 and lysine 76; that span reads GIGKST. Position 51 (serine 51) interacts with Mg(2+). Cysteine 132 and cysteine 166 together coordinate [4Fe-4S] cluster. ATP-binding positions include 217-218 and 241-243; these read NR and PDL.

The protein belongs to the NifH/BchL/ChlL family. As to quaternary structure, homodimer. Protochlorophyllide reductase is composed of three subunits; BchL, BchN and BchB. Requires [4Fe-4S] cluster as cofactor.

It catalyses the reaction chlorophyllide a + oxidized 2[4Fe-4S]-[ferredoxin] + 2 ADP + 2 phosphate = protochlorophyllide a + reduced 2[4Fe-4S]-[ferredoxin] + 2 ATP + 2 H2O. The protein operates within porphyrin-containing compound metabolism; bacteriochlorophyll biosynthesis (light-independent). Functionally, component of the dark-operative protochlorophyllide reductase (DPOR) that uses Mg-ATP and reduced ferredoxin to reduce ring D of protochlorophyllide (Pchlide) to form chlorophyllide a (Chlide). This reaction is light-independent. The L component serves as a unique electron donor to the NB-component of the complex, and binds Mg-ATP. This is Light-independent protochlorophyllide reductase iron-sulfur ATP-binding protein from Rhodospirillum centenum (strain ATCC 51521 / SW).